The sequence spans 213 residues: ATP phosphoribosyltransferase (213 aa).

It belongs to the ATP phosphoribosyltransferase family. Short subfamily. Heteromultimer composed of HisG and HisZ subunits.

It is found in the cytoplasm. It catalyses the reaction 1-(5-phospho-beta-D-ribosyl)-ATP + diphosphate = 5-phospho-alpha-D-ribose 1-diphosphate + ATP. It participates in amino-acid biosynthesis; L-histidine biosynthesis; L-histidine from 5-phospho-alpha-D-ribose 1-diphosphate: step 1/9. Its function is as follows. Catalyzes the condensation of ATP and 5-phosphoribose 1-diphosphate to form N'-(5'-phosphoribosyl)-ATP (PR-ATP). Has a crucial role in the pathway because the rate of histidine biosynthesis seems to be controlled primarily by regulation of HisG enzymatic activity. In Bacillus velezensis (strain DSM 23117 / BGSC 10A6 / LMG 26770 / FZB42) (Bacillus amyloliquefaciens subsp. plantarum), this protein is ATP phosphoribosyltransferase.